Consider the following 207-residue polypeptide: LPS-assembly lipoprotein LptE (207 aa).

The N-terminal stretch at 1–19 is a signal peptide; it reads MRHRILTLLLGLAVLVTAG. Residue Cys20 is the site of N-palmitoyl cysteine attachment. Cys20 carries S-diacylglycerol cysteine lipidation. Residues 168 to 207 form a disordered region; the sequence is KNTQKNGDKPVSDANAAQGSTPTAVNETTLGEPAVSTSAK. The span at 182–207 shows a compositional bias: polar residues; that stretch reads NAAQGSTPTAVNETTLGEPAVSTSAK.

It belongs to the LptE lipoprotein family. In terms of assembly, component of the lipopolysaccharide transport and assembly complex. Interacts with LptD.

Its subcellular location is the cell outer membrane. Together with LptD, is involved in the assembly of lipopolysaccharide (LPS) at the surface of the outer membrane. Required for the proper assembly of LptD. Binds LPS and may serve as the LPS recognition site at the outer membrane. The chain is LPS-assembly lipoprotein LptE from Yersinia pseudotuberculosis serotype O:1b (strain IP 31758).